We begin with the raw amino-acid sequence, 487 residues long: Serine/threonine-protein kinase 4 (487 aa).

The residue at position 1 (Met-1) is an N-acetylmethionine. The residue at position 3 (Thr-3) is a Phosphothreonine. The 252-residue stretch at 30 to 281 (FDVLEKLGEG…ATQLLQHPFV (252 aa)) folds into the Protein kinase domain. ATP contacts are provided by residues 36–44 (LGEGSYGSV) and Lys-59. Asp-149 serves as the catalytic Proton acceptor. At Thr-183 the chain carries Phosphothreonine; by autocatalysis. Ser-265 bears the Phosphoserine mark. Residues 289–311 (ILRDLINEAMDVKLKRQEAQQRE) are a coiled coil. Positions 305–334 (QEAQQREVDQDDEENSEEDEMDSGTMVRAA) are disordered. Over residues 313 to 326 (DQDDEENSEEDEMD) the composition is skewed to acidic residues. Position 320 is a phosphoserine (Ser-320). A phosphothreonine mark is found at Thr-340 and Thr-367. Phosphothreonine; by PKB/AKT1 is present on Thr-387. Residue Ser-410 is modified to Phosphoserine. Phosphotyrosine is present on Tyr-433. The region spanning 433-480 (YEFLKSWTVEDLQKRLLALDPMMEQEMEEIRQKYRSKRQPILDAIEAK) is the SARAH domain.

It belongs to the protein kinase superfamily. STE Ser/Thr protein kinase family. STE20 subfamily. In terms of assembly, homodimer; mediated via the coiled-coil region. Interacts with NORE1, which inhibits autoactivation. Interacts with and stabilizes SAV1. Interacts with RASSF1. Interacts with FOXO3. Interacts with RASSF2 (via SARAH domain). Interacts with AR, PKB/AKT1, TNNI3 and SIRT1. Interacts with MARK3 and SCRIB in the presence of DLG5. Interacts with DLG5 (via PDZ domain 3). Requires Mg(2+) as cofactor. Autophosphorylated on serine and threonine residues. Phosphorylation at Thr-387 by PKB/AKT1, leads to inhibition of its: kinase activity, nuclear translocation and autophosphorylation at Thr-183. It also diminishes its cleavage by caspases and its ability to phosphorylate FOXO3. In terms of processing, proteolytically cleaved by caspase-3 during apoptosis at Asp-326 resulting in a 37 kDa form. Proteolytic cleavage results in kinase activation and nuclear translocation of the truncated form (MST1/N).

The protein localises to the cytoplasm. It is found in the nucleus. The catalysed reaction is L-seryl-[protein] + ATP = O-phospho-L-seryl-[protein] + ADP + H(+). The enzyme catalyses L-threonyl-[protein] + ATP = O-phospho-L-threonyl-[protein] + ADP + H(+). With respect to regulation, inhibited by the C-terminal non-catalytic region. Activated by caspase-cleavage. Full activation also requires homodimerization and autophosphorylation of Thr-183. Activated by RASSF1 which acts by preventing its dephosphorylation. In terms of biological role, stress-activated, pro-apoptotic kinase which, following caspase-cleavage, enters the nucleus and induces chromatin condensation followed by internucleosomal DNA fragmentation. Key component of the Hippo signaling pathway which plays a pivotal role in organ size control and tumor suppression by restricting proliferation and promoting apoptosis. The core of this pathway is composed of a kinase cascade wherein STK3/MST2 and STK4/MST1, in complex with its regulatory protein SAV1, phosphorylates and activates LATS1/2 in complex with its regulatory protein MOB1, which in turn phosphorylates and inactivates YAP1 oncoprotein and WWTR1/TAZ. Phosphorylation of YAP1 by LATS2 inhibits its translocation into the nucleus to regulate cellular genes important for cell proliferation, cell death, and cell migration. STK3/MST2 and STK4/MST1 are required to repress proliferation of mature hepatocytes, to prevent activation of facultative adult liver stem cells (oval cells), and to inhibit tumor formation. Phosphorylates 'Ser-14' of histone H2B (H2BS14ph) during apoptosis. Phosphorylates FOXO3 upon oxidative stress, which results in its nuclear translocation and cell death initiation. Phosphorylates MOBKL1A, MOBKL1B and RASSF2. Phosphorylates TNNI3 (cardiac Tn-I) and alters its binding affinity to TNNC1 (cardiac Tn-C) and TNNT2 (cardiac Tn-T). Phosphorylates FOXO1 on 'Ser-212' and regulates its activation and stimulates transcription of PMAIP1 in a FOXO1-dependent manner. Phosphorylates SIRT1 and inhibits SIRT1-mediated p53/TP53 deacetylation, thereby promoting p53/TP53 dependent transcription and apoptosis upon DNA damage. Acts as an inhibitor of PKB/AKT1. Phosphorylates AR on 'Ser-650' and suppresses its activity by intersecting with PKB/AKT1 signaling and antagonizing formation of AR-chromatin complexes. This is Serine/threonine-protein kinase 4 (Stk4) from Mus musculus (Mouse).